Consider the following 174-residue polypeptide: NADPH-dependent 7-cyano-7-deazaguanine reductase (174 aa).

Residue C72 is the Thioimide intermediate of the active site. The active-site Proton donor is D79. Residues 94-96 (VES) and 113-114 (HE) contribute to the substrate site.

Belongs to the GTP cyclohydrolase I family. QueF type 1 subfamily.

It localises to the cytoplasm. It catalyses the reaction 7-aminomethyl-7-carbaguanine + 2 NADP(+) = 7-cyano-7-deazaguanine + 2 NADPH + 3 H(+). It participates in tRNA modification; tRNA-queuosine biosynthesis. In terms of biological role, catalyzes the NADPH-dependent reduction of 7-cyano-7-deazaguanine (preQ0) to 7-aminomethyl-7-deazaguanine (preQ1). In Synechococcus elongatus (strain ATCC 33912 / PCC 7942 / FACHB-805) (Anacystis nidulans R2), this protein is NADPH-dependent 7-cyano-7-deazaguanine reductase.